Reading from the N-terminus, the 237-residue chain is Survival of motor neuron-related-splicing factor 30 (237 aa).

Residues 52 to 69 (SQPAEGTTSTKSSETVAP) show a composition bias toward polar residues. Disordered regions lie at residues 52-73 (SQPA…SHSW) and 149-198 (REYK…RSIF). A Tudor domain is found at 72–132 (SWRVGDHCMA…KKVEEGRIRD (61 aa)). The short motif at 142–160 (KELQAEQREYKKKKAQKKV) is the Nuclear localization signal element. The span at 151–161 (YKKKKAQKKVQ) shows a compositional bias: basic residues. The segment covering 162 to 175 (RMKELEQEREDQKS) has biased composition (basic and acidic residues). Residues 176 to 185 (KWQQFNNKAY) show a composition bias toward polar residues.

It belongs to the SMN family. As to quaternary structure, associates with spliceosomes.

The protein resides in the nucleus speckle. It is found in the nucleus. The protein localises to the cajal body. Functionally, involved in spliceosome assembly. In Danio rerio (Zebrafish), this protein is Survival of motor neuron-related-splicing factor 30 (smndc1).